The primary structure comprises 471 residues: Ubiquitin carboxyl-terminal hydrolase 8 (471 aa).

Residues Cys-4, His-6, Cys-46, Cys-49, Cys-60, Cys-63, Cys-68, His-73, His-77, His-83, Cys-96, and Cys-99 each contribute to the Zn(2+) site. The segment at 22-122 adopts a UBP-type; degenerate zinc-finger fold; that stretch reads KTCNAARYIL…ILAKYWDDVC (101 aa). The region spanning 137–468 is the USP domain; sequence SGLINMGSTC…QAYLLFYTIR (332 aa). The active-site Nucleophile is Cys-146. Positions 170, 174, 182, 185, 250, 271, 273, 276, 289, 292, 336, and 339 each coordinate Zn(2+). Residue His-427 is the Proton acceptor of the active site.

It belongs to the peptidase C19 family. UBP8 subfamily. Component of the 1.8 MDa SAGA (Spt-Ada-Gcn5 acetyltransferase) complex, which is composed of 19 subunits TRA1, SPT7, TAF5, NGG1/ADA3, SGF73, SPT20/ADA5, SPT8, TAF12, TAF6, HFI1/ADA1, UBP8, GCN5, ADA2, SPT3, SGF29, TAF10, TAF9, SGF11 and SUS1. The SAGA complex is composed of 4 modules, namely the HAT (histone acetyltransferase) module (GCN5, ADA2, NGG1/ADA3 and SGF29), the DUB (deubiquitinating) module (UBP8, SGF11, SGF73 and SUS1), the core or TAF (TBP-associated factor) module (TAF5, TAF6, TAF9, TAF10 and TAF12), and the Tra1 or SPT (Suppressor of Ty) module (TRA1, HFI1/ADA1, SPT3, SPT7, SPT8 and SPT20/ADA5). The Tra1/SPT module binds activators, the core module recruits TBP (TATA-binding protein), the HAT module contains the histone H3 acetyltransferase GCN5, and the DUB module comprises the histone H2B deubiquitinase UBP8. Also identified in an altered form of SAGA, named SALSA (SAGA altered, Spt8 absent) or SLIK (SAGA-like) complex, which contains a C-terminal truncated form of SPT7 and is missing SPT8. However, it has been shown that the SAGA and SAGA-like SALSA/SLIK transcriptional coactivators are structurally and biochemically equivalent.

The protein resides in the nucleus. It catalyses the reaction Thiol-dependent hydrolysis of ester, thioester, amide, peptide and isopeptide bonds formed by the C-terminal Gly of ubiquitin (a 76-residue protein attached to proteins as an intracellular targeting signal).. Histone deubiquitinating enzyme component of the transcription coactivator SAGA complex. SAGA acts as a general cofactor required for essentially all RNA polymerase II transcription. At the promoters, SAGA is required for transcription pre-initiation complex (PIC) recruitment. It influences RNA polymerase II transcriptional activity through different activities such as TBP interaction (via core/TAF module) and promoter selectivity, interaction with transcription activators (via Tra1/SPT module), and chromatin modification through histone acetylation (via HAT module) and deubiquitination (via DUB module). SAGA preferentially acetylates histones H3 (to form H3K9ac, H3K14ac, H3K18ac and H3K23ac) and H2B and deubiquitinates histone H2B. SAGA interacts with DNA via upstream activating sequences (UASs). Also identified in a modified version of SAGA named SALSA or SLIK. The cleavage of SPT7 and the absence of the SPT8 subunit in SLIK neither drive any major conformational differences in its structure compared with SAGA, nor significantly affect HAT, DUB, or DNA-binding activities. Within the DUB module, the correctly positioned zinc finger domains of SGF11 and SGF73 are both required to fully activate the ubiquitin hydrolase UBP8. The DUB module is also linked to the splicing efficiency of many transcripts. This Saccharomyces cerevisiae (strain ATCC 204508 / S288c) (Baker's yeast) protein is Ubiquitin carboxyl-terminal hydrolase 8 (UBP8).